Consider the following 37-residue polypeptide: Large ribosomal subunit protein bL36c (37 aa).

This sequence belongs to the bacterial ribosomal protein bL36 family.

It localises to the plastid. The protein resides in the chloroplast. This is Large ribosomal subunit protein bL36c (rpl36) from Porphyra purpurea (Red seaweed).